A 507-amino-acid polypeptide reads, in one-letter code: Cytochrome P450 monooxygenase helB3 (507 aa).

The N-terminal stretch at 1–25 (MAVATLISILFAVLALRLCYLLIHA) is a signal peptide. Asn-111, Asn-206, and Asn-339 each carry an N-linked (GlcNAc...) asparagine glycan. Cys-435 provides a ligand contact to heme.

Belongs to the cytochrome P450 family. Requires heme as cofactor.

It functions in the pathway mycotoxin biosynthesis. Its function is as follows. Cytochrome P450 monooxygenase; part of the gene cluster that mediates the biosynthesis of helvolic acid, an antibacterial nortriterpenoid. Protostadienol synthase helA cyclizes (3S)-oxidosqualene to (17Z)-protosta-17(20),24-dien-3-beta-ol (protostadienol). The synthesis of protostadienol is followed by several steps of monooxygenation, dehydrogenation, and acyl transfer to yield the final helvolic acid. Following the cyclization to the tetracyclic protostadienol by helA, cytochrome P450 monooxygenases helB1-mediated and helB2-mediated oxidation at C-4 and C-16, acyltransferase helD2-dependent acetylation of 16-OH, oxidation of C-21 by cytochrome P450 monooxygenase helB4, and short chain dehydrogenase helC-dependent oxidative decarboxylation yield the fusidane skeleton. This intermediate is further modified in three additional steps mediated by the cytochrome P450 monooxygenase helB3, the acyltransferase helD1, and the 3-ketosteroid 1-dehydrogenase helE to give helvolic acid. Compared with the late stages in the biosynthesis of helvolic acid, enzymes involved in the early stage modifications act in a relatively strict order. The hydroxylation of C-16 by helB1 and subsequent acetylation by helD2 should occur before the helB3-mediated oxidation of C-21. C-4 demethylation in fusidane-type antibiotics proceeds in an unusual manner though it is also achieved by oxidative decarboxylation. The methyl group at C-4 beta position is oxidized by helB1 and subsequently removed by the short chain dehydrogenase helC. The chain is Cytochrome P450 monooxygenase helB3 from Aspergillus fumigatus (strain ATCC MYA-4609 / CBS 101355 / FGSC A1100 / Af293) (Neosartorya fumigata).